The following is a 530-amino-acid chain: Netrin-G2 (530 aa).

Residues 1 to 17 (MLHLLALFLHCLPLASG) form the signal peptide. Disulfide bonds link Cys22–Cys39, Cys61–Cys81, and Cys69–Cys77. The Laminin N-terminal domain maps to 35-286 (EFYACQPKVM…AISNIEVIGR (252 aa)). The segment at 69 to 88 (CSHENPYLCSNECDASNPDL) is NGL discriminant loop I. Asn122 and Asn128 each carry an N-linked (GlcNAc...) asparagine glycan. An intrachain disulfide couples Cys171 to Cys195. The interval 201-203 (RWA) is NGL discriminant loop II. An NGL discriminant loop III region spans residues 264–267 (TYVQ). 15 disulfides stabilise this stretch: Cys287-Cys296, Cys289-Cys305, Cys307-Cys316, Cys319-Cys344, Cys353-Cys362, Cys355-Cys373, Cys376-Cys385, Cys388-Cys406, Cys409-Cys421, Cys411-Cys427, Cys429-Cys438, Cys441-Cys451, Cys456-Cys469, Cys463-Cys475, and Cys477-Cys486. Laminin EGF-like domains lie at 287–346 (CKCN…ACAT), 353–408 (CECY…VCIE), and 409–453 (CNCN…GCYP). The N-linked (GlcNAc...) asparagine glycan is linked to Asn310. Asn395 carries N-linked (GlcNAc...) asparagine glycosylation. Residue Asn422 is glycosylated (N-linked (GlcNAc...) asparagine). Gly507 carries the GPI-anchor amidated glycine lipid modification. Residues 508–530 (AAPRPATLLGCLLLLGLAARLGR) constitute a propeptide, removed in mature form.

Interacts with LRRC4. N-glycosylated.

Its subcellular location is the cell membrane. Its function is as follows. Involved in controlling patterning and neuronal circuit formation at the laminar, cellular, subcellular and synaptic levels. Promotes neurite outgrowth of both axons and dendrites. In Homo sapiens (Human), this protein is Netrin-G2.